The following is a 591-amino-acid chain: Isocitrate dehydrogenase kinase/phosphatase (591 aa).

ATP-binding positions include 322–328 and Lys-343; that span reads APGIRGL. Asp-378 is an active-site residue.

It belongs to the AceK family.

The protein localises to the cytoplasm. It carries out the reaction L-seryl-[isocitrate dehydrogenase] + ATP = O-phospho-L-seryl-[isocitrate dehydrogenase] + ADP + H(+). Bifunctional enzyme which can phosphorylate or dephosphorylate isocitrate dehydrogenase (IDH) on a specific serine residue. This is a regulatory mechanism which enables bacteria to bypass the Krebs cycle via the glyoxylate shunt in response to the source of carbon. When bacteria are grown on glucose, IDH is fully active and unphosphorylated, but when grown on acetate or ethanol, the activity of IDH declines drastically concomitant with its phosphorylation. This Aromatoleum aromaticum (strain DSM 19018 / LMG 30748 / EbN1) (Azoarcus sp. (strain EbN1)) protein is Isocitrate dehydrogenase kinase/phosphatase.